Reading from the N-terminus, the 145-residue chain is MTLTDYVREVSLADFGKPFKHQASWNRRLRTTGGRFFPKDGHLDFNPKILEEHGETVFRQIVRHELCHYHLYFEGLGFRHKDQAFKELLDQVDGLRYAPRLQSHQANYLYICQHCGQAYDRKRPINLAVFACGRCHGRLIEKNQS.

A SprT-like domain is found at 5-140 (DYVREVSLAD…ACGRCHGRLI (136 aa)). His-64 is a binding site for Zn(2+). The active site involves Glu-65. His-68 contributes to the Zn(2+) binding site.

It belongs to the SprT family. Zn(2+) is required as a cofactor.

The protein resides in the cytoplasm. This Streptococcus equi subsp. zooepidemicus (strain MGCS10565) protein is Protein SprT-like.